Reading from the N-terminus, the 167-residue chain is UPF0179 protein Pisl_0688 (167 aa).

Belongs to the UPF0179 family.

The protein is UPF0179 protein Pisl_0688 of Pyrobaculum islandicum (strain DSM 4184 / JCM 9189 / GEO3).